The following is a 488-amino-acid chain: Glutamyl-tRNA(Gln) amidotransferase subunit A (488 aa).

Active-site charge relay system residues include lysine 77 and serine 152. Serine 176 functions as the Acyl-ester intermediate in the catalytic mechanism.

It belongs to the amidase family. GatA subfamily. As to quaternary structure, heterotrimer of A, B and C subunits.

It catalyses the reaction L-glutamyl-tRNA(Gln) + L-glutamine + ATP + H2O = L-glutaminyl-tRNA(Gln) + L-glutamate + ADP + phosphate + H(+). Its function is as follows. Allows the formation of correctly charged Gln-tRNA(Gln) through the transamidation of misacylated Glu-tRNA(Gln) in organisms which lack glutaminyl-tRNA synthetase. The reaction takes place in the presence of glutamine and ATP through an activated gamma-phospho-Glu-tRNA(Gln). This chain is Glutamyl-tRNA(Gln) amidotransferase subunit A, found in Streptococcus pyogenes serotype M12 (strain MGAS2096).